A 1292-amino-acid chain; its full sequence is Epidermal growth factor receptor (1292 aa).

Topologically, residues Met-1 to Pro-641 are extracellular. Residues Asn-31, Asn-224, Asn-263, Asn-323, Asn-342, Asn-600, and Asn-605 are each glycosylated (N-linked (GlcNAc...) asparagine). Residues Ala-642–Met-662 traverse the membrane as a helical segment. The Cytoplasmic segment spans residues Tyr-663–Val-1292. Thr-675 carries the phosphothreonine; by PKC modification. The 268-residue stretch at Met-711–Leu-978 folds into the Protein kinase domain. Residues Leu-717 to Val-725 and Lys-744 each bind ATP. Residue Asp-836 is the Proton acceptor of the active site. The disordered stretch occupies residues Pro-1022 to Gln-1066. Tyr-1166 carries the post-translational modification Phosphotyrosine; by autocatalysis. The interval Ser-1253–Val-1292 is disordered. Over residues Arg-1258–Val-1292 the composition is skewed to basic and acidic residues.

This sequence belongs to the protein kinase superfamily. Tyr protein kinase family. EGF receptor subfamily.

The protein resides in the membrane. The catalysed reaction is L-tyrosyl-[protein] + ATP = O-phospho-L-tyrosyl-[protein] + ADP + H(+). With respect to regulation, activated by MRJP1 during queen determination of honeybee larvae. Functionally, upon binding to its ligands, transduces the signal through the ras-raf-MAPK pathway and is involved in a myriad of developmental decisions. Involved in the determination of adult size, ovary development, and development timing, especially during queen determination of honeybee larvae. May have an important role in the prolongation of longevity in queens. The chain is Epidermal growth factor receptor (Egfr) from Apis mellifera (Honeybee).